We begin with the raw amino-acid sequence, 299 residues long: tRNA(Met) cytidine acetate ligase (299 aa).

ATP-binding positions include 6-19 (IAEYNPFHNGHIYM), Gly-100, Asn-157, and Arg-182.

It belongs to the TmcAL family.

The protein localises to the cytoplasm. The enzyme catalyses cytidine(34) in elongator tRNA(Met) + acetate + ATP = N(4)-acetylcytidine(34) in elongator tRNA(Met) + AMP + diphosphate. Functionally, catalyzes the formation of N(4)-acetylcytidine (ac(4)C) at the wobble position of elongator tRNA(Met), using acetate and ATP as substrates. First activates an acetate ion to form acetyladenylate (Ac-AMP) and then transfers the acetyl group to tRNA to form ac(4)C34. This Mycoplasma mobile (strain ATCC 43663 / 163K / NCTC 11711) (Mesomycoplasma mobile) protein is tRNA(Met) cytidine acetate ligase.